A 456-amino-acid polypeptide reads, in one-letter code: tRNA modification GTPase MnmE (456 aa).

The (6S)-5-formyl-5,6,7,8-tetrahydrofolate site is built by R25, E87, and R126. A TrmE-type G domain is found at 221–377 (GLKVAIVGQP…LENAIIEQVN (157 aa)). K(+) is bound at residue N231. Residues 231-236 (NVGKSS), 250-256 (TDLPGTT), and 275-278 (DTAG) contribute to the GTP site. S235 lines the Mg(2+) pocket. Residues T250, L252, and T255 each coordinate K(+). T256 contacts Mg(2+). K456 lines the (6S)-5-formyl-5,6,7,8-tetrahydrofolate pocket.

Belongs to the TRAFAC class TrmE-Era-EngA-EngB-Septin-like GTPase superfamily. TrmE GTPase family. Homodimer. Heterotetramer of two MnmE and two MnmG subunits. Requires K(+) as cofactor.

It localises to the cytoplasm. Its function is as follows. Exhibits a very high intrinsic GTPase hydrolysis rate. Involved in the addition of a carboxymethylaminomethyl (cmnm) group at the wobble position (U34) of certain tRNAs, forming tRNA-cmnm(5)s(2)U34. This Synechocystis sp. (strain ATCC 27184 / PCC 6803 / Kazusa) protein is tRNA modification GTPase MnmE.